The chain runs to 505 residues: uncharacterized protein (505 aa).

A signal peptide spans 1 to 22 (MAILKSALVGFICFLHFFIVNA). 2 N-linked (GlcNAc...) asparagine glycosylation sites follow: N25 and N114. Transmembrane regions (helical) follow at residues 181 to 201 (LFLN…WSFI), 216 to 236 (ISGV…YFYF), 266 to 286 (FLLL…GSLL), 291 to 311 (ILAG…FISP), and 318 to 338 (VILF…LWIV). N342 carries N-linked (GlcNAc...) asparagine glycosylation. The next 2 membrane-spanning stretches (helical) occupy residues 365-385 (IVIC…AILI) and 400-420 (LLWF…MLTI). The N-linked (GlcNAc...) asparagine glycan is linked to N454.

Belongs to the LU7TM family.

Its subcellular location is the membrane. This is an uncharacterized protein from Schizosaccharomyces pombe (strain 972 / ATCC 24843) (Fission yeast).